Here is a 123-residue protein sequence, read N- to C-terminus: Large ribosomal subunit protein bL12 (123 aa).

The protein belongs to the bacterial ribosomal protein bL12 family. Homodimer. Part of the ribosomal stalk of the 50S ribosomal subunit. Forms a multimeric L10(L12)X complex, where L10 forms an elongated spine to which 2 to 4 L12 dimers bind in a sequential fashion. Binds GTP-bound translation factors.

In terms of biological role, forms part of the ribosomal stalk which helps the ribosome interact with GTP-bound translation factors. Is thus essential for accurate translation. This chain is Large ribosomal subunit protein bL12, found in Bacillus licheniformis (strain ATCC 14580 / DSM 13 / JCM 2505 / CCUG 7422 / NBRC 12200 / NCIMB 9375 / NCTC 10341 / NRRL NRS-1264 / Gibson 46).